The primary structure comprises 975 residues: DNA primase (975 aa).

The CHC2-type zinc-finger motif lies at 919–958 (CIQHDHRDGRENVQFFLDFRPESATTIWTTLWSRCFSRKC).

The protein belongs to the herpesviridae DNA primase family. As to quaternary structure, associates with the helicase and the primase-associated factor to form the helicase-primase factor.

It is found in the host nucleus. Essential component of the helicase/primase complex. Unwinds the DNA at the replication forks and generates single-stranded DNA for both leading and lagging strand synthesis. The primase initiates primer synthesis and thereby produces large amount of short RNA primers on the lagging strand that the polymerase elongates using dNTPs. This Elephas maximus (Indian elephant) protein is DNA primase.